Consider the following 1472-residue polypeptide: Adhesion G protein-coupled receptor L1 (1472 aa).

A signal peptide spans 1–24; the sequence is MARLAAVLWSLCVTAILVTSATQG. Over 25-857 the chain is Extracellular; that stretch reads LSRAGLPFGL…EIYQGRINEL (833 aa). The 90-residue stretch at 40–129 folds into the SUEL-type lectin domain; sequence ACEGYPIELR…KYLEVQYDCV (90 aa). 5 disulfide bridges follow: Cys-41–Cys-71, Cys-50–Cys-128, Cys-83–Cys-115, Cys-96–Cys-102, and Cys-140–Cys-322. Alpha-L-rhamnose is bound at residue Glu-42. N-linked (GlcNAc...) asparagine glycosylation is present at Asn-98. 117–120 lines the alpha-L-rhamnose pocket; it reads GTYK. Positions 139–398 constitute an Olfactomedin-like domain; that stretch reads VCPGTLQKVL…VVRYSLEFGP (260 aa). Residues 400–468 form a disordered region; sequence DPSAGPATSP…APAPSTRRPP (69 aa). Residues 405–441 are compositionally biased toward low complexity; it reads PATSPPLSTTTTARPTPLTSTASPAATTPLRRAPLTT. Positions 453–468 are enriched in pro residues; the sequence is DLPPATAPAPSTRRPP. Cystine bridges form between Cys-480-Cys-515 and Cys-503-Cys-532. Residues Asn-531, Asn-640, Asn-741, Asn-800, Asn-805, and Asn-826 are each glycosylated (N-linked (GlcNAc...) asparagine). The 182-residue stretch at 669–850 folds into the GAIN-B domain; the sequence is PARFLAAKQN…AVLMAHREIY (182 aa). Cystine bridges form between Cys-801–Cys-832 and Cys-820–Cys-834. Residues 801 to 850 form a GPS region; that stretch reads CSFWNYSERSMLGYWSTQGCRLVESNKTHTTCACSHLTNFAVLMAHREIY. The chain crosses the membrane as a helical span at residues 858–878; it reads LLSVITWVGIVISLVCLAICI. Residues 879 to 892 are Cytoplasmic-facing; sequence STFCFLRGLQTDRN. Residues 893–913 traverse the membrane as a helical segment; sequence TIHKNLCINLFLAELLFLVGI. At 914–919 the chain is on the extracellular side; the sequence is DKTQYE. Residues 920–940 traverse the membrane as a helical segment; sequence IACPIFAGLLHYFFLAAFSWL. At 941 to 963 the chain is on the cytoplasmic side; the sequence is CLEGVHLYLLLVEVFESEYSRTK. Residues 964-984 traverse the membrane as a helical segment; that stretch reads YYYLGGYCFPALVVGIAAAID. The Extracellular segment spans residues 985 to 1001; the sequence is YRSYGTEKACWLRVDNY. The chain crosses the membrane as a helical span at residues 1002–1022; it reads FIWSFIGPVSFVIVVNLVFLM. Topologically, residues 1023-1049 are cytoplasmic; sequence VTLHKMVRSSSVLKPDSSRLDNIKSWA. A helical membrane pass occupies residues 1050-1070; it reads LGAIALLFLLGLTWAFGLLFI. At 1071 to 1074 the chain is on the extracellular side; sequence NKES. A helical transmembrane segment spans residues 1075–1095; it reads VVMAYLFTTFNAFQGVFIFVF. Over 1096–1472 the chain is Cytoplasmic; the sequence is HCALQKKVHK…DGQMQLVTSL (377 aa). Arg-1193 carries the omega-N-methylarginine modification. Ser-1219 is subject to Phosphoserine. Disordered stretches follow at residues 1247-1271, 1291-1325, 1358-1427, and 1449-1472; these read FNNS…PRGR, NLRG…GGPG, ESES…SRPP, and YLAA…VTSL. Pro residues-rich tracts occupy residues 1301 to 1313 and 1406 to 1418; these read GPPP…PPVP and ALPP…PGPP. Ser-1471 bears the Phosphoserine mark.

The protein belongs to the G-protein coupled receptor 2 family. Adhesion G-protein coupled receptor (ADGR) subfamily. As to quaternary structure, forms a heterodimer, consisting of a large extracellular region (p120) non-covalently linked to a seven-transmembrane moiety (p85). Interacts with syntaxin and with proteins of the SHANK family via the PDZ domain. Interacts (via extracellular domain) with FLRT1, FLRT2 and FLRT3 (via extracellular domain). Post-translationally, autoproteolytically cleaved into 2 subunits, an extracellular subunit and a seven-transmembrane subunit. This proteolytic processing takes place early in the biosynthetic pathway, either in the endoplasmic reticulum or in the early compartment of the Golgi apparatus. Brain-specific expression but low levels are also detected in kidney, lung and spleen.

The protein localises to the cell membrane. It is found in the cell projection. The protein resides in the axon. Its subcellular location is the growth cone. It localises to the synapse. The protein localises to the presynaptic cell membrane. It is found in the synaptosome. Calcium-independent receptor of high affinity for alpha-latrotoxin, an excitatory neurotoxin present in black widow spider venom which triggers massive exocytosis from neurons and neuroendocrine cells. Receptor for TENM2 that mediates heterophilic synaptic cell-cell contact and postsynaptic specialization. Receptor probably implicated in the regulation of exocytosis. This is Adhesion G protein-coupled receptor L1 from Bos taurus (Bovine).